Here is a 203-residue protein sequence, read N- to C-terminus: Pyridoxal 5'-phosphate synthase subunit PdxT (203 aa).

51–53 (GES) contacts L-glutamine. Catalysis depends on C83, which acts as the Nucleophile. L-glutamine is bound by residues R110 and 137–138 (IR). Catalysis depends on charge relay system residues H172 and E174.

The protein belongs to the glutaminase PdxT/SNO family. In terms of assembly, in the presence of PdxS, forms a dodecamer of heterodimers. Only shows activity in the heterodimer.

It carries out the reaction aldehydo-D-ribose 5-phosphate + D-glyceraldehyde 3-phosphate + L-glutamine = pyridoxal 5'-phosphate + L-glutamate + phosphate + 3 H2O + H(+). The catalysed reaction is L-glutamine + H2O = L-glutamate + NH4(+). Its pathway is cofactor biosynthesis; pyridoxal 5'-phosphate biosynthesis. In terms of biological role, catalyzes the hydrolysis of glutamine to glutamate and ammonia as part of the biosynthesis of pyridoxal 5'-phosphate. The resulting ammonia molecule is channeled to the active site of PdxS. The polypeptide is Pyridoxal 5'-phosphate synthase subunit PdxT (Thermoplasma acidophilum (strain ATCC 25905 / DSM 1728 / JCM 9062 / NBRC 15155 / AMRC-C165)).